We begin with the raw amino-acid sequence, 194 residues long: MTPGAIAILSLSMSTDAFAAAVSRGASHRPGVVSAVKAGFVFGVIEAITPLIGWSLGLVAADLVKEVDHWIAFGLLTIVGGKMIWEATRSQDHHEEGAAPKRSNRWALIATAVGTSIDAAAVGVGLAFIGANIWVIAASIGFTTFVCTTVGMLIGKTVGQRFGKMAELIGGLALVGLGAMILIQHTGVLKTQLG.

6 consecutive transmembrane segments (helical) span residues 2–22 (TPGAIAILSLSMSTDAFAAAV), 40–60 (FVFGVIEAITPLIGWSLGLVA), 67–87 (VDHWIAFGLLTIVGGKMIWEA), 107–129 (ALIATAVGTSIDAAAVGVGLAFI), 133–155 (IWVIAASIGFTTFVCTTVGMLIG), and 168–188 (LIGGLALVGLGAMILIQHTGV).

This sequence belongs to the MntP (TC 9.B.29) family.

Its subcellular location is the cell inner membrane. Functionally, probably functions as a manganese efflux pump. This is Putative manganese efflux pump MntP from Rhodopseudomonas palustris (strain BisA53).